A 166-amino-acid chain; its full sequence is Crossover junction endodeoxyribonuclease RuvC (166 aa).

Residues aspartate 7, glutamate 67, and aspartate 140 contribute to the active site. 3 residues coordinate Mg(2+): aspartate 7, glutamate 67, and aspartate 140.

This sequence belongs to the RuvC family. As to quaternary structure, homodimer which binds Holliday junction (HJ) DNA. The HJ becomes 2-fold symmetrical on binding to RuvC with unstacked arms; it has a different conformation from HJ DNA in complex with RuvA. In the full resolvosome a probable DNA-RuvA(4)-RuvB(12)-RuvC(2) complex forms which resolves the HJ. It depends on Mg(2+) as a cofactor.

The protein localises to the cytoplasm. It catalyses the reaction Endonucleolytic cleavage at a junction such as a reciprocal single-stranded crossover between two homologous DNA duplexes (Holliday junction).. In terms of biological role, the RuvA-RuvB-RuvC complex processes Holliday junction (HJ) DNA during genetic recombination and DNA repair. Endonuclease that resolves HJ intermediates. Cleaves cruciform DNA by making single-stranded nicks across the HJ at symmetrical positions within the homologous arms, yielding a 5'-phosphate and a 3'-hydroxyl group; requires a central core of homology in the junction. The consensus cleavage sequence is 5'-(A/T)TT(C/G)-3'. Cleavage occurs on the 3'-side of the TT dinucleotide at the point of strand exchange. HJ branch migration catalyzed by RuvA-RuvB allows RuvC to scan DNA until it finds its consensus sequence, where it cleaves and resolves the cruciform DNA. The chain is Crossover junction endodeoxyribonuclease RuvC from Brevibacillus brevis (strain 47 / JCM 6285 / NBRC 100599).